A 783-amino-acid polypeptide reads, in one-letter code: MGSGFSSLLPCFNQGHRNRRRHSSAANPSHSDLIDSFREPLDETLGHSYCYVPSSSNRFISPFPSDRFVSPTASFRLSPPHEPGRIRGSGSSEQLHTGFRAISGASVSANTSNSKTVLQLEDIYDDATESSFGGGVRRSVVNANGFEGTSSFSALPLQPGPDRSGLFMSGPIERGATSGPLDPPAGEISRSNSAGVHFSAPLGGVYSKKRRKKKKKSLSWHPIFGGEKKQRPWVLPVSNFVVGAKKENIVRPDVEAMAASSGENDLQWALGKAGEDRVQLAVFEKQGWLFAGIYDGFNGPDAPEFLMANLYRAVHSELQGLFWELEEEDDNPTDISTRELEQQGEFEDHVNEMASSSCPATEKEEEEMGKRLTSSLEVVEVKERKRLWELLAEAQAEDALDLSGSDRFAFSVDDAIGAGNAVSVGSKRWLLLSKLKQGLSKQGISGRKLFPWKSGVEENETEEVDNVGVEEGVDKRRKRRKAGTVDHELVLKAMSNGLEATEQAFLEMTDKVLETNPELALMGSCLLVALMRDDDVYIMNIGDSRALVAQYQVEETGESVETAERVEERRNDLDRDDGNKEPLVVDSSDSTVNNEAPLPQTKLVALQLTTDHSTSIEDEVTRIKNEHPDDNHCIVNDRVKGRLKVTRAFGAGFLKQPKLNDALLEMFRNEYIGTDPYISCTPSLRHYRLTENDQFMVLSSDGLYQYLSNVEVVSLAMEKFPDGDPAQHVIQELLVRAAKKAGMDFHELLDIPQGDRRKYHDDCTVLVIALGGSRIWKSSGKYL.

The segment at 151–194 (SFSALPLQPGPDRSGLFMSGPIERGATSGPLDPPAGEISRSNSA) is disordered. At Ser-199 the chain carries Phosphoserine. The PPM-type phosphatase domain maps to 260-770 (SSGENDLQWA…DDCTVLVIAL (511 aa)). Asp-295 and Gly-296 together coordinate Mn(2+). The tract at residues 555–595 (ETGESVETAERVEERRNDLDRDDGNKEPLVVDSSDSTVNNE) is disordered. The span at 562 to 580 (TAERVEERRNDLDRDDGNK) shows a compositional bias: basic and acidic residues. Mn(2+) contacts are provided by Asp-701 and Asp-761.

Belongs to the PP2C family. The cofactor is Mg(2+). Mn(2+) is required as a cofactor. Expressed in roots, leaves, stems, inflorescences, flowers and developing vascular tissue.

It is found in the nucleus. The enzyme catalyses O-phospho-L-seryl-[protein] + H2O = L-seryl-[protein] + phosphate. It carries out the reaction O-phospho-L-threonyl-[protein] + H2O = L-threonyl-[protein] + phosphate. Its function is as follows. Involved in the regulation of pedicel length and of CLAVATA pathways controlling stem cell identity at shoot and flower meristems. The protein is Protein phosphatase 2C 29 (PLL1) of Arabidopsis thaliana (Mouse-ear cress).